A 615-amino-acid chain; its full sequence is MESSRLFTLGLGNSDDGLKSTFGDKTVTCFYCNKKKEKIRDGTSTWTCSICEATNHIDEKGDILDYRPPTPTQDKGVGPFYAIRDFPSSSSFQSPFCEKCQMNQLIVNRMLADYLPDSSHPDYQAYEKALPEYKKSIEEKFPIVCSECYDSVQDQLDANDYEAKNQVLGYWLQKSKEQLNAKVPHHYPKASFVLWLLRGFGFSFFYLQSIVWHLYHSMIISLLPDGIRNLFLKAISYFLLDGSSSKIFYFNWLGFFVVFWNPYWYKMMDNPSWELFGRDQYIQCQALYLIIRLTCLYLLSCYESEILNLSSDTNLESDFLLRQIHAAFFFVTICFTWISISCLKPSPPPEVHLTGEILKPRKKRQESTSSVHRIGKESSDRKDGISGQNKLQQFATISILNNTNATSHLGNQSVRERAPEESPMTFLQKKMAALPTSSPVRPMLKPTLQLQNSPLSKLVPQEVGNKVNDSIHTTSNQPSKFSLNPSISLKGDNVIEKNLPFSVSTLKSTAKKDTGKAGDGQNREIQNEPVSLESHFSKSLALQNDPTEVIQVKNVLHRNRRNAKLLIAFTILFLVGLICGWRLNRFTMFIYYLCILVLATYYVMKHNFYPLRKVA.

3 consecutive transmembrane segments (helical) span residues 192–212, 247–267, and 323–343; these read FVLW…SIVW, IFYF…WYKM, and QIHA…ISCL. The tract at residues 357–387 is disordered; that stretch reads ILKPRKKRQESTSSVHRIGKESSDRKDGISG. Basic and acidic residues predominate over residues 374–384; that stretch reads IGKESSDRKDG. 2 helical membrane passes run 563-583 and 586-606; these read AKLL…GWRL and FTMF…VMKH.

Its subcellular location is the nucleus inner membrane. Its function is as follows. Inner nuclear membrane protein that specifically binds to heterochromatic regions and promotes the tethering of centromeric DNA to the SUN-KASH complex. Couples centromeres to the nuclear envelope, thus contributing to their association with the microtubule organizing center attachment site and to the positioning of the nucleus at the cell center by microtubules. The polypeptide is Integral inner nuclear membrane protein ima1 (IMA1) (Schizosaccharomyces pombe (strain 972 / ATCC 24843) (Fission yeast)).